The primary structure comprises 384 residues: 4-hydroxy-3-methylbut-2-en-1-yl diphosphate synthase (flavodoxin) (384 aa).

The [4Fe-4S] cluster site is built by C272, C275, C307, and E314.

This sequence belongs to the IspG family. [4Fe-4S] cluster serves as cofactor.

The catalysed reaction is (2E)-4-hydroxy-3-methylbut-2-enyl diphosphate + oxidized [flavodoxin] + H2O + 2 H(+) = 2-C-methyl-D-erythritol 2,4-cyclic diphosphate + reduced [flavodoxin]. The protein operates within isoprenoid biosynthesis; isopentenyl diphosphate biosynthesis via DXP pathway; isopentenyl diphosphate from 1-deoxy-D-xylulose 5-phosphate: step 5/6. Functionally, converts 2C-methyl-D-erythritol 2,4-cyclodiphosphate (ME-2,4cPP) into 1-hydroxy-2-methyl-2-(E)-butenyl 4-diphosphate. The chain is 4-hydroxy-3-methylbut-2-en-1-yl diphosphate synthase (flavodoxin) from Rhodospirillum rubrum (strain ATCC 11170 / ATH 1.1.1 / DSM 467 / LMG 4362 / NCIMB 8255 / S1).